We begin with the raw amino-acid sequence, 417 residues long: Serine hydroxymethyltransferase (417 aa).

(6S)-5,6,7,8-tetrahydrofolate is bound by residues L121 and 125-127 (GHL). N6-(pyridoxal phosphate)lysine is present on K230. 355–357 (SPF) serves as a coordination point for (6S)-5,6,7,8-tetrahydrofolate.

This sequence belongs to the SHMT family. Homodimer. The cofactor is pyridoxal 5'-phosphate.

It localises to the cytoplasm. The catalysed reaction is (6R)-5,10-methylene-5,6,7,8-tetrahydrofolate + glycine + H2O = (6S)-5,6,7,8-tetrahydrofolate + L-serine. It functions in the pathway one-carbon metabolism; tetrahydrofolate interconversion. The protein operates within amino-acid biosynthesis; glycine biosynthesis; glycine from L-serine: step 1/1. Catalyzes the reversible interconversion of serine and glycine with tetrahydrofolate (THF) serving as the one-carbon carrier. This reaction serves as the major source of one-carbon groups required for the biosynthesis of purines, thymidylate, methionine, and other important biomolecules. Also exhibits THF-independent aldolase activity toward beta-hydroxyamino acids, producing glycine and aldehydes, via a retro-aldol mechanism. The chain is Serine hydroxymethyltransferase from Ruthia magnifica subsp. Calyptogena magnifica.